The sequence spans 436 residues: Probable glucose-6-phosphate isomerase (436 aa).

Glutamate 272 (proton donor) is an active-site residue. Active-site residues include histidine 293 and lysine 404.

Belongs to the GPI family.

The protein localises to the cytoplasm. The catalysed reaction is alpha-D-glucose 6-phosphate = beta-D-fructose 6-phosphate. The protein operates within carbohydrate biosynthesis; gluconeogenesis. It participates in carbohydrate degradation; glycolysis; D-glyceraldehyde 3-phosphate and glycerone phosphate from D-glucose: step 2/4. Functionally, catalyzes the reversible isomerization of glucose-6-phosphate to fructose-6-phosphate. This chain is Probable glucose-6-phosphate isomerase, found in Haloarcula marismortui (strain ATCC 43049 / DSM 3752 / JCM 8966 / VKM B-1809) (Halobacterium marismortui).